Reading from the N-terminus, the 282-residue chain is 2,3,4,5-tetrahydropyridine-2,6-dicarboxylate N-succinyltransferase (282 aa).

The substrate site is built by Arg109 and Asp146.

This sequence belongs to the transferase hexapeptide repeat family. In terms of assembly, homotrimer.

The protein localises to the cytoplasm. It carries out the reaction (S)-2,3,4,5-tetrahydrodipicolinate + succinyl-CoA + H2O = (S)-2-succinylamino-6-oxoheptanedioate + CoA. It participates in amino-acid biosynthesis; L-lysine biosynthesis via DAP pathway; LL-2,6-diaminopimelate from (S)-tetrahydrodipicolinate (succinylase route): step 1/3. The sequence is that of 2,3,4,5-tetrahydropyridine-2,6-dicarboxylate N-succinyltransferase from Bartonella henselae (strain ATCC 49882 / DSM 28221 / CCUG 30454 / Houston 1) (Rochalimaea henselae).